The primary structure comprises 531 residues: Cytochrome c oxidase subunit 1 (531 aa).

Residues 18 to 38 (ILYLIYGMVSAMVATGMSVII) traverse the membrane as a helical segment. Ca(2+)-binding residues include Glu41 and Gly46. 6 helical membrane passes run 59-79 (VLVT…ILIG), 103-123 (ISFW…LIET), 149-169 (AIFA…NFIV), 185-205 (PLFV…LPVL), 237-257 (LFYF…FGII), and 269-289 (IFGQ…GFLV). A Fe(II)-heme a-binding site is contributed by His64. Position 243 (His243) interacts with Cu cation. A cross-link (1'-histidyl-3'-tyrosine (His-Tyr)) is located at residues 243–247 (HPEVY). Position 247 (Tyr247) interacts with O2. 2 residues coordinate Cu cation: His292 and His293. 2 helical membrane passes run 312 to 332 (MVIA…LYGG) and 340 to 360 (MLFA…GVML). His370 and Asp371 together coordinate Mg(2+). Position 378 (His378) interacts with heme a3. Residue His380 participates in Fe(II)-heme a binding. 2 helical membrane-spanning segments follow: residues 385-405 (MGAL…MFGL) and 414-434 (VHYW…HFLG). Pro443 provides a ligand contact to Ca(2+). A helical membrane pass occupies residues 458–478 (WGSIMSVISVLIGLYSVLVQL).

It belongs to the heme-copper respiratory oxidase family. In terms of assembly, component of the cytochrome c oxidase (complex IV, CIV), a multisubunit enzyme composed of a catalytic core of 3 subunits and several supernumerary subunits. The complex exists as a monomer or a dimer and forms supercomplexes (SCs) in the inner mitochondrial membrane with ubiquinol-cytochrome c oxidoreductase (cytochrome b-c1 complex, complex III, CIII). Heme serves as cofactor. The cofactor is Cu cation.

It localises to the mitochondrion inner membrane. The enzyme catalyses 4 Fe(II)-[cytochrome c] + O2 + 8 H(+)(in) = 4 Fe(III)-[cytochrome c] + 2 H2O + 4 H(+)(out). It participates in energy metabolism; oxidative phosphorylation. Its function is as follows. Component of the cytochrome c oxidase, the last enzyme in the mitochondrial electron transport chain which drives oxidative phosphorylation. The respiratory chain contains 3 multisubunit complexes succinate dehydrogenase (complex II, CII), ubiquinol-cytochrome c oxidoreductase (cytochrome b-c1 complex, complex III, CIII) and cytochrome c oxidase (complex IV, CIV), that cooperate to transfer electrons derived from NADH and succinate to molecular oxygen, creating an electrochemical gradient over the inner membrane that drives transmembrane transport and the ATP synthase. Cytochrome c oxidase is the component of the respiratory chain that catalyzes the reduction of oxygen to water. Electrons originating from reduced cytochrome c in the intermembrane space (IMS) are transferred via the dinuclear copper A center (CU(A)) of subunit 2 and heme A of subunit 1 to the active site in subunit 1, a binuclear center (BNC) formed by heme A3 and copper B (CU(B)). The BNC reduces molecular oxygen to 2 water molecules using 4 electrons from cytochrome c in the IMS and 4 protons from the mitochondrial matrix. The protein is Cytochrome c oxidase subunit 1 (COX1) of Candida albicans (strain SC5314 / ATCC MYA-2876) (Yeast).